A 430-amino-acid polypeptide reads, in one-letter code: Tol-Pal system protein TolB (430 aa).

An N-terminal signal peptide occupies residues 1–26 (MSLMTKLGLRTLVASCLIAVGGAAHA).

This sequence belongs to the TolB family. In terms of assembly, the Tol-Pal system is composed of five core proteins: the inner membrane proteins TolA, TolQ and TolR, the periplasmic protein TolB and the outer membrane protein Pal. They form a network linking the inner and outer membranes and the peptidoglycan layer.

It is found in the periplasm. Functionally, part of the Tol-Pal system, which plays a role in outer membrane invagination during cell division and is important for maintaining outer membrane integrity. The sequence is that of Tol-Pal system protein TolB from Paraburkholderia phytofirmans (strain DSM 17436 / LMG 22146 / PsJN) (Burkholderia phytofirmans).